The chain runs to 334 residues: tRNA N6-adenosine threonylcarbamoyltransferase (334 aa).

Fe cation contacts are provided by His111 and His115. Substrate is bound by residues 134 to 138 (IVSGG), Asp167, Gly180, Asp184, and Asn272. Fe cation is bound at residue Asp300.

It belongs to the KAE1 / TsaD family. Requires Fe(2+) as cofactor.

It localises to the cytoplasm. The enzyme catalyses L-threonylcarbamoyladenylate + adenosine(37) in tRNA = N(6)-L-threonylcarbamoyladenosine(37) in tRNA + AMP + H(+). Functionally, required for the formation of a threonylcarbamoyl group on adenosine at position 37 (t(6)A37) in tRNAs that read codons beginning with adenine. Is involved in the transfer of the threonylcarbamoyl moiety of threonylcarbamoyl-AMP (TC-AMP) to the N6 group of A37, together with TsaE and TsaB. TsaD likely plays a direct catalytic role in this reaction. This chain is tRNA N6-adenosine threonylcarbamoyltransferase, found in Dictyoglomus turgidum (strain DSM 6724 / Z-1310).